The chain runs to 286 residues: Bifunctional protein FolD (286 aa).

Residues G166 to S168, S191, and I232 contribute to the NADP(+) site.

The protein belongs to the tetrahydrofolate dehydrogenase/cyclohydrolase family. As to quaternary structure, homodimer.

The catalysed reaction is (6R)-5,10-methylene-5,6,7,8-tetrahydrofolate + NADP(+) = (6R)-5,10-methenyltetrahydrofolate + NADPH. The enzyme catalyses (6R)-5,10-methenyltetrahydrofolate + H2O = (6R)-10-formyltetrahydrofolate + H(+). The protein operates within one-carbon metabolism; tetrahydrofolate interconversion. Catalyzes the oxidation of 5,10-methylenetetrahydrofolate to 5,10-methenyltetrahydrofolate and then the hydrolysis of 5,10-methenyltetrahydrofolate to 10-formyltetrahydrofolate. The protein is Bifunctional protein FolD of Herpetosiphon aurantiacus (strain ATCC 23779 / DSM 785 / 114-95).